Here is a 212-residue protein sequence, read N- to C-terminus: tRNA(Phe) 7-((3-amino-3-carboxypropyl)-4-demethylwyosine(37)-N(4))-methyltransferase 2 (212 aa).

Belongs to the TYW3 family.

It catalyses the reaction 4-demethyl-7-[(3S)-3-amino-3-carboxypropyl]wyosine(37) in tRNA(Phe) + S-adenosyl-L-methionine = 7-[(3S)-3-amino-3-carboxypropyl]wyosine(37) in tRNA(Phe) + S-adenosyl-L-homocysteine + H(+). Its function is as follows. S-adenosyl-L-methionine-dependent methyltransferase that acts as a component of the wyosine derivatives biosynthesis pathway. Probably methylates N-4 position of wybutosine-86 to produce wybutosine-72. The protein is tRNA(Phe) 7-((3-amino-3-carboxypropyl)-4-demethylwyosine(37)-N(4))-methyltransferase 2 of Thermococcus kodakarensis (strain ATCC BAA-918 / JCM 12380 / KOD1) (Pyrococcus kodakaraensis (strain KOD1)).